The primary structure comprises 73 residues: Stigmurin (73 aa).

A signal peptide spans 1 to 22 (MQIKHLITLFFLVLIVADQCSA). Lys39 carries the post-translational modification Lysine amide. A propeptide spanning residues 45–73 (EISAQIEQYKDLQKREAELEKLLDRLPMY) is cleaved from the precursor.

This sequence belongs to the non-disulfide-bridged peptide (NDBP) superfamily. Short antimicrobial peptide (group 4) family. In terms of tissue distribution, expressed by the venom gland.

Its subcellular location is the secreted. In terms of biological role, antimicrobial peptide with activity against Gram-positive bacterial strains (S.aureus (MIC=2-140 uM), methicillin-resistant S.aureus (MRSA) (MIC=8-17 uM), S.epidermidis (MIC=1.17 uM), and the yeasts C.albicans, C.krusei, and C.glabrata (MIC=34-69 uM)). Acts by disrupting the cell membrane (observed on outer layer of the S.aureus). Is not active against Gram-negative bacteria (E.coli, E.Cloacae, P.aeruginosa), and the Gram-positive bacterium E.faecalis. Also shows toxicity against several cell lines, but possess low hemolytic activity at the highest concentration tested. Also shows antiparasitic activity against Trypanosoma cruzi by decreasing the viability of the epimastigote and trypomastigote forms of the parasite. Displays high hydroxyl radical scavenging activity (antioxidant action). In a wound infection model, the topical application of this peptide demonstrates antibacterial effects, as well as an ability to accelerate wound closure speed, which suggests the induction of tissue repair. In the model of polymicrobial sepsis, it exhibits an antibiotic effect, reducing the levels of microorganisms in the infectious focus and the inflammatory responses in the lung and cecum of septic animals. In Tityus stigmurus (Brazilian scorpion), this protein is Stigmurin.